The following is a 245-amino-acid chain: 1-(5-phosphoribosyl)-5-[(5-phosphoribosylamino)methylideneamino] imidazole-4-carboxamide isomerase (245 aa).

Asp7 functions as the Proton acceptor in the catalytic mechanism. The Proton donor role is filled by Asp129.

The protein belongs to the HisA/HisF family.

The protein localises to the cytoplasm. The enzyme catalyses 1-(5-phospho-beta-D-ribosyl)-5-[(5-phospho-beta-D-ribosylamino)methylideneamino]imidazole-4-carboxamide = 5-[(5-phospho-1-deoxy-D-ribulos-1-ylimino)methylamino]-1-(5-phospho-beta-D-ribosyl)imidazole-4-carboxamide. It participates in amino-acid biosynthesis; L-histidine biosynthesis; L-histidine from 5-phospho-alpha-D-ribose 1-diphosphate: step 4/9. In Escherichia coli O45:K1 (strain S88 / ExPEC), this protein is 1-(5-phosphoribosyl)-5-[(5-phosphoribosylamino)methylideneamino] imidazole-4-carboxamide isomerase.